A 153-amino-acid polypeptide reads, in one-letter code: METNNNLSTQLFKCYFCDILKLKMHKMSCIHLLYLVLCFLTLTHSAAAGPETLCGAELVDTLQFVCGDRGFYFSKPTGYGSNNRRSHHRGIVDECCFQSCDFRRLEMYCAPAKQAKSARSVRTQRHTDMPKAQKEVHPKNTSRGNTGSRGFRM.

4 disulfides stabilise this stretch: C29/C38, C54/C96, C66/C109, and C100/C109. A b region spans residues 49–77 (GPETLCGAELVDTLQFVCGDRGFYFSKPT). The segment at 78–89 (GYGSNNRRSHHR) is c. An a region spans residues 90–110 (GIVDECCFQSCDFRRLEMYCA). Residues 111-118 (PAKQAKSA) are d. Residues 119–153 (RSVRTQRHTDMPKAQKEVHPKNTSRGNTGSRGFRM) constitute a propeptide, e peptide. Residues 119–153 (RSVRTQRHTDMPKAQKEVHPKNTSRGNTGSRGFRM) are disordered. Over residues 125-138 (RHTDMPKAQKEVHP) the composition is skewed to basic and acidic residues. Residues 139-153 (KNTSRGNTGSRGFRM) show a composition bias toward polar residues.

It belongs to the insulin family. In terms of tissue distribution, expressed in adult liver, lung, heart, kidney and peritoneal fat.

Its subcellular location is the secreted. Functionally, the insulin-like growth factors, isolated from plasma, are structurally and functionally related to insulin but have a much higher growth-promoting activity. Promotes head development by inhibiting Wnt signaling during embryogenesis. Acts as a ligand for IGF1R. Binds to the alpha subunit of IGF1R, leading to the activation of the intrinsic tyrosine kinase activity which autophosphorylates tyrosine residues in the beta subunit thus initiatiating a cascade of down-stream signaling events leading to activation of the PI3K-AKT/PKB and the Ras-MAPK pathways. Binds to integrins. Its binding to integrins and subsequent ternary complex formation with integrins and IGFR1 are essential for IGF1 signaling. The protein is Insulin-like growth factor 1.S of Xenopus laevis (African clawed frog).